The following is a 447-amino-acid chain: Kynurenine 3-monooxygenase (447 aa).

Belongs to the aromatic-ring hydroxylase family. KMO subfamily. The cofactor is FAD.

It catalyses the reaction L-kynurenine + NADPH + O2 + H(+) = 3-hydroxy-L-kynurenine + NADP(+) + H2O. Its pathway is cofactor biosynthesis; NAD(+) biosynthesis; quinolinate from L-kynurenine: step 1/3. Its function is as follows. Catalyzes the hydroxylation of L-kynurenine (L-Kyn) to form 3-hydroxy-L-kynurenine (L-3OHKyn). Required for synthesis of quinolinic acid. The chain is Kynurenine 3-monooxygenase from Christiangramia forsetii (strain DSM 17595 / CGMCC 1.15422 / KT0803) (Gramella forsetii).